A 101-amino-acid polypeptide reads, in one-letter code: Small integral membrane protein 21 (101 aa).

The helical transmembrane segment at 49–65 (HIRFFTLLVLFHVMVLL) threads the bilayer.

Its subcellular location is the membrane. The chain is Small integral membrane protein 21 (SMIM21) from Homo sapiens (Human).